The sequence spans 270 residues: UPF0354 protein BCAH820_4810 (270 aa).

This sequence belongs to the UPF0354 family.

The polypeptide is UPF0354 protein BCAH820_4810 (Bacillus cereus (strain AH820)).